The sequence spans 902 residues: Proline-rich transmembrane protein 4 (902 aa).

An N-terminal signal peptide occupies residues 1 to 18; it reads MAGRGCLELGLFCWVLLA. Disordered stretches follow at residues 120–149 and 262–337; these read FTPWASSLPPESTSPLSGPTKRPTAPSQPR and PPPL…SGQP. The span at 125–139 shows a compositional bias: low complexity; it reads SSLPPESTSPLSGPT. Residues 271–301 are compositionally biased toward polar residues; it reads SSPSPLDSVASPSSASIKTTPVQHDPTVSTS. 5 helical membrane-spanning segments follow: residues 371-391, 393-413, 431-451, 465-485, and 501-521; these read AGALFGLVALLALLSLALLPW, CPPGAPCLALLDLLLLSAGTT, ALAWLLLQDLPLPCLAAGLGL, PIGLAALLLLGLGLAAAAALG, and GLHAFLAAFLSGLLLALSCWG. At S642 the chain carries Phosphoserine. 3 disordered regions span residues 700-721, 771-811, and 836-872; these read GARANTTQSPASSPSSDCTVDF, KTGA…SLCG, and VLSPPRPSESSPSLPASGSYQALSPPSRDSPEHASEL. The span at 703–717 shows a compositional bias: polar residues; that stretch reads ANTTQSPASSPSSDC. The segment covering 786 to 798 has biased composition (pro residues); sequence SPAPPELPSPGAW. 2 stretches are compositionally biased toward low complexity: residues 799-811 and 843-854; these read PPGSSASSGSLCG and SESSPSLPASGS.

Its subcellular location is the membrane. In Rattus norvegicus (Rat), this protein is Proline-rich transmembrane protein 4 (Prrt4).